A 232-amino-acid polypeptide reads, in one-letter code: Vesicle transport through interaction with t-SNAREs homolog 1B (232 aa).

Ala-2 bears the N-acetylalanine mark. Interaction with CLINT1 regions lie at residues 2 to 23 (ATSA…GLLE) and 69 to 73 (APLTF). The Cytoplasmic portion of the chain corresponds to 2-208 (ATSAASSEHF…SRKVITNKLL (207 aa)). Residues 36 to 98 (AGTEEKKKLV…AKLHREVRST (63 aa)) adopt a coiled-coil conformation. Thr-103 is subject to Phosphothreonine. Arg-107 carries the post-translational modification Omega-N-methylarginine. Phosphoserine is present on Ser-138. Positions 160 to 201 (GSEIIEELGEQRDQLERTKSRLVNTNENLSKSRKILRSMSRK) form a coiled coil. The chain crosses the membrane as a helical; Anchor for type IV membrane protein span at residues 209–229 (LSVIIVLELAILVGLVYYKFF). Over 230–232 (RHH) the chain is Vesicular.

The protein belongs to the VTI1 family. In terms of assembly, forms a SNARE complex with STX7, STX8 and VAMP8 which functions in the homotypic fusion of late endosomes. Component of the SNARE complex composed of STX7, STX8, VAMP7 and VIT1B that is required for heterotypic fusion of late endosomes with lysosomes. May interact with STX17. Interacts with CLINT1.

Its subcellular location is the early endosome membrane. The protein resides in the late endosome membrane. It localises to the lysosome membrane. The protein localises to the cytoplasmic granule. It is found in the recycling endosome membrane. In terms of biological role, V-SNARE that mediates vesicle transport pathways through interactions with t-SNAREs on the target membrane. These interactions are proposed to mediate aspects of the specificity of vesicle trafficking and to promote fusion of the lipid bilayers. This chain is Vesicle transport through interaction with t-SNAREs homolog 1B (Vti1b), found in Rattus norvegicus (Rat).